The primary structure comprises 482 residues: 3-isopropylmalate dehydratase large subunit (482 aa).

The tract at residues 60-79 (ATPDHNVPTTRAERQGGLES) is disordered. Residues Cys353, Cys414, and Cys417 each contribute to the [4Fe-4S] cluster site.

It belongs to the aconitase/IPM isomerase family. LeuC type 1 subfamily. Heterodimer of LeuC and LeuD. [4Fe-4S] cluster is required as a cofactor.

The catalysed reaction is (2R,3S)-3-isopropylmalate = (2S)-2-isopropylmalate. It functions in the pathway amino-acid biosynthesis; L-leucine biosynthesis; L-leucine from 3-methyl-2-oxobutanoate: step 2/4. Catalyzes the isomerization between 2-isopropylmalate and 3-isopropylmalate, via the formation of 2-isopropylmaleate. In Xanthomonas euvesicatoria pv. vesicatoria (strain 85-10) (Xanthomonas campestris pv. vesicatoria), this protein is 3-isopropylmalate dehydratase large subunit.